Consider the following 305-residue polypeptide: Regulator of microtubule dynamics protein 1 (305 aa).

Lys160 bears the N6-succinyllysine mark. 2 TPR repeats span residues 163–199 and 217–253; these read AICISDVGDYEGIKVKIANAYVIKEHFEKAIELNPKD and PWYQRRIAKVLFANPPSSTYEEALRYFHKAEEVDPNF. Lys245 bears the N6-succinyllysine mark.

It belongs to the RMDN family. Interacts with microtubules.

Its subcellular location is the cytoplasm. It is found in the cytoskeleton. The protein localises to the spindle. It localises to the spindle pole. In Mus musculus (Mouse), this protein is Regulator of microtubule dynamics protein 1 (Rmdn1).